The sequence spans 748 residues: Histone-lysine N-methyltransferase EZH2 (748 aa).

Over residues 184–199 the composition is skewed to acidic residues; that stretch reads YEDDEDGDDNQDDEQD. 2 disordered regions span residues 184-220 and 342-428; these read YEDD…LRKF and AERI…NIEP. A compositionally biased stretch (basic and acidic residues) spans 200 to 220; it reads DTAKDQDDNMEDKETQPLRKF. The segment covering 347–359 has biased composition (basic residues); it reads TPPKRPSGRRRGR. Residues 362–374 are compositionally biased toward polar residues; the sequence is NNTSRPSTPTVNV. Residues 376 to 387 show a composition bias toward basic and acidic residues; the sequence is EAKDTDSDREAG. One can recognise a CXC domain in the interval 505–607; it reads CRKIQLKKDG…SKNVSCKNCS (103 aa). The SET domain occupies 614–729; that stretch reads KHLLLAPSDV…TGEELFFDYR (116 aa).

Belongs to the class V-like SAM-binding methyltransferase superfamily. Histone-lysine methyltransferase family. EZ subfamily. As to quaternary structure, component of the prc2/eed-ezh2 complex.

Its subcellular location is the nucleus. The enzyme catalyses L-lysyl(27)-[histone H3] + 3 S-adenosyl-L-methionine = N(6),N(6),N(6)-trimethyl-L-lysyl(27)-[histone H3] + 3 S-adenosyl-L-homocysteine + 3 H(+). Functionally, polycomb group (PcG) protein. Catalytic subunit of the prc2/eed-ezh2 complex, which methylates 'Lys-9' and 'Lys-27' of histone H3, leading to transcriptional repression of the affected target gene. May repress transcription of the egr2 and en2 genes. May regulate the circadian clock via histone methylation at the promoter of the circadian genes. This Xenopus laevis (African clawed frog) protein is Histone-lysine N-methyltransferase EZH2 (ezh2-a).